The chain runs to 141 residues: Small ribosomal subunit protein bS6 (141 aa).

A disordered region spans residues 97 to 141; the sequence is TGQSEMLKAEENRSERRERRDRPEHADSADGDDSDNSDASDNADE. Residues 103 to 124 show a composition bias toward basic and acidic residues; the sequence is LKAEENRSERRERRDRPEHADS. The span at 125-141 shows a compositional bias: acidic residues; it reads ADGDDSDNSDASDNADE.

This sequence belongs to the bacterial ribosomal protein bS6 family.

Binds together with bS18 to 16S ribosomal RNA. This Pseudomonas fluorescens (strain ATCC BAA-477 / NRRL B-23932 / Pf-5) protein is Small ribosomal subunit protein bS6.